The chain runs to 394 residues: GPI mannosyltransferase 2 (394 aa).

The next 9 membrane-spanning stretches (helical) occupy residues 2–22 (LWKL…IIYF), 47–67 (YYNV…SVYF), 104–124 (LTSI…LYYL), 132–152 (FGLV…LTGN), 185–205 (SITN…NFTV), 232–252 (IILS…TNIY), 293–313 (IPNF…LGYM), 323–343 (LLPL…FWNI), and 371–391 (YAIG…AAFL).

It belongs to the PIGV family.

It localises to the endoplasmic reticulum membrane. Its pathway is glycolipid biosynthesis; glycosylphosphatidylinositol-anchor biosynthesis. Functionally, mannosyltransferase involved in glycosylphosphatidylinositol-anchor biosynthesis. Transfers the second mannose to the glycosylphosphatidylinositol during GPI precursor assembly. The polypeptide is GPI mannosyltransferase 2 (GPI18) (Candida albicans (strain SC5314 / ATCC MYA-2876) (Yeast)).